Here is a 456-residue protein sequence, read N- to C-terminus: Protein shifted (456 aa).

The first 30 residues, methionine 1 to cysteine 30, serve as a signal peptide directing secretion. Residues histidine 34–asparagine 112 are disordered. Basic and acidic residues predominate over residues arginine 44–histidine 55. An N-linked (GlcNAc...) asparagine glycan is attached at asparagine 57. Residues histidine 77–glutamine 87 show a composition bias toward basic residues. The span at glutamine 88–serine 107 shows a compositional bias: gly residues. The WIF domain maps to leucine 119 to cysteine 261. 3 N-linked (GlcNAc...) asparagine glycosylation sites follow: asparagine 173, asparagine 217, and asparagine 227. 16 disulfides stabilise this stretch: cysteine 224/cysteine 261, cysteine 283/cysteine 293, cysteine 287/cysteine 299, cysteine 301/cysteine 310, cysteine 315/cysteine 325, cysteine 319/cysteine 331, cysteine 333/cysteine 342, cysteine 347/cysteine 357, cysteine 351/cysteine 363, cysteine 365/cysteine 374, cysteine 379/cysteine 389, cysteine 383/cysteine 395, cysteine 397/cysteine 406, cysteine 416/cysteine 423, cysteine 418/cysteine 429, and cysteine 431/cysteine 440. 5 consecutive EGF-like domains span residues threonine 279 to glutamate 311, cysteine 315 to cysteine 342, glutamate 343 to glutamate 375, tyrosine 376 to glutamate 407, and glutamine 412 to asparagine 441. The N-linked (GlcNAc...) asparagine glycan is linked to asparagine 324. Residue asparagine 420 is glycosylated (N-linked (GlcNAc...) asparagine).

As to quaternary structure, interacts with hh. As to expression, at the blastoderm stage, it is ubiquitously expressed. As embryogenesis continues, it is expressed in the epidermis and central nervous system, this expression being segmentally modulated. Also highly expressed at the foregut and hindgut throughout embryogenesis. In third instar wing imaginal disks, it is highly expressed in the most anterior and posterior parts of the disk and weakly expressed at the antero/posterior (A/P) compartment border. In the leg disks and the antenna part of the eye-antennal imaginal disk it is also weakly expressed at the A/P compartment border. Weakly expressed in the morphogenetic furrow in the eye primordium.

It localises to the secreted. The protein resides in the extracellular space. The protein localises to the extracellular matrix. Required for normal accumulation and movement of lipid-modified hedgehog (hh) morphogen. May act by stabilizing the interaction between heparan sulfate proteoglycans (HSPGs) and hh, HSPGs being required for diffusion of hh morphogen. Not involved in wingless (wg) morphogen movement, suggesting that it may provide HSPG specificity for Hh. This is Protein shifted (shf) from Drosophila melanogaster (Fruit fly).